Reading from the N-terminus, the 221-residue chain is Ribosomal RNA small subunit methyltransferase G (221 aa).

S-adenosyl-L-methionine is bound by residues glycine 83, phenylalanine 88, leucine 132–glutamate 133, and arginine 146.

It belongs to the methyltransferase superfamily. RNA methyltransferase RsmG family.

It localises to the cytoplasm. It catalyses the reaction guanosine(527) in 16S rRNA + S-adenosyl-L-methionine = N(7)-methylguanosine(527) in 16S rRNA + S-adenosyl-L-homocysteine. Functionally, specifically methylates the N7 position of guanine in position 527 of 16S rRNA. The sequence is that of Ribosomal RNA small subunit methyltransferase G from Zymomonas mobilis subsp. mobilis (strain ATCC 31821 / ZM4 / CP4).